The primary structure comprises 2146 residues: YLP motif-containing protein 1 (2146 aa).

Disordered stretches follow at residues 1–381 and 562–880; these read MYPN…ARLK and PPVM…FKMQ. A compositionally biased stretch (pro residues) spans 14–26; it reads YPPPPVPPPPPVA. Composition is skewed to low complexity over residues 27–48 and 58–79; these read LPEA…PSSS and LAQL…LQPH. 5 stretches are compositionally biased toward pro residues: residues 80–92, 101–113, 147–157, 165–175, and 183–194; these read HLPP…PPVM, QPPP…PPGP, PESPPVPPGSY, MPPPQPPPSYY, and YLPPAQPSPSQS. Positions 195 to 237 are enriched in low complexity; that stretch reads PPSQSYLAPTPSYSSSSSSSQSYLSHSQSYLPSSQASPSRPSQ. Polar residues-rich tracts occupy residues 256–279 and 286–308; these read NKTT…QQQA and STMT…LQQR. Residues 309–319 show a composition bias toward basic residues; the sequence is TKVHLPGHKKG. Residues 325-334 are compositionally biased toward basic and acidic residues; sequence DTPEPVKEEV. Composition is skewed to pro residues over residues 349–368, 562–579, and 586–642; these read EEPP…PPEE, PPVM…PGMP, and GPPP…PQGI. The segment covering 643-663 has biased composition (low complexity); sequence PPQLTAAPVPPASSSQSSQVP. Residues 692–702 are compositionally biased toward polar residues; sequence AGPSEQVNSKA. Position 735 is an N6-methyllysine (Lys735). Ser756 bears the Phosphoserine mark. Basic and acidic residues predominate over residues 758-806; sequence RGPRFDGPRRFEDLGSRCEGPRPKGPRFEGNRPDGPRPRYEGHPAEGTK. Residue Arg814 is modified to Omega-N-methylarginine. Composition is skewed to polar residues over residues 820–835 and 868–880; these read FYIT…QSGP and DTSS…FKMQ. Ser829 is subject to Phosphoserine. Arg831 carries the post-translational modification Omega-N-methylarginine. Lys891 is covalently cross-linked (Glycyl lysine isopeptide (Lys-Gly) (interchain with G-Cter in SUMO2)). 2 disordered regions span residues 895-1211 and 1243-1351; these read AAQS…GRNA and NRED…DDRW. Polar residues-rich tracts occupy residues 896–909 and 923–933; these read AQSN…QQEP and NWDQNVQSMET. Lys983 is covalently cross-linked (Glycyl lysine isopeptide (Lys-Gly) (interchain with G-Cter in SUMO1); alternate). Lys983 is covalently cross-linked (Glycyl lysine isopeptide (Lys-Gly) (interchain with G-Cter in SUMO2); alternate). 3 stretches are compositionally biased toward basic and acidic residues: residues 994–1012, 1027–1036, and 1053–1093; these read NNQD…RLEG, RMEDTRDKGL, and KQED…REKV. Lys1053 is covalently cross-linked (Glycyl lysine isopeptide (Lys-Gly) (interchain with G-Cter in SUMO1); alternate). A Glycyl lysine isopeptide (Lys-Gly) (interchain with G-Cter in SUMO2); alternate cross-link involves residue Lys1053. Phosphoserine occurs at positions 1100 and 1119. 2 stretches are compositionally biased toward basic and acidic residues: residues 1129-1211 and 1243-1264; these read GSRE…GRNA and NRED…RGPW. The segment covering 1266-1276 has biased composition (acidic residues); it reads DDWERDQDMDE. Residues 1277–1328 show a composition bias toward basic and acidic residues; the sequence is DYNREMERDMDRDVDRISRPMDMYDRSLDNEWDRDYGRPLDEQESQFRERDI. A compositionally biased stretch (pro residues) spans 1330–1342; it reads SLPPLPPLPPLPP. Ser1402 carries the post-translational modification Phosphoserine. Disordered regions lie at residues 1407-1438, 1469-1573, and 1602-1828; these read PSDV…SLDS, QKEQ…EQER, and IPSA…PPGR. The span at 1417–1430 shows a compositional bias: low complexity; the sequence is AEHMPSSHHSSEMM. The segment covering 1469–1480 has biased composition (basic and acidic residues); it reads QKEQLQKMKDFG. Residues 1505–1520 show a composition bias toward pro residues; the sequence is MYPPPGSYRPPPPMGK. The span at 1521-1539 shows a compositional bias: low complexity; sequence PPGSIVRPSAPPARSSVPV. Composition is skewed to pro residues over residues 1540–1562 and 1606–1636; these read TRPP…PPVI and PVLP…PPPV. Lys1652 participates in a covalent cross-link: Glycyl lysine isopeptide (Lys-Gly) (interchain with G-Cter in SUMO2). 4 stretches are compositionally biased toward basic and acidic residues: residues 1662–1696, 1704–1774, 1783–1793, and 1809–1828; these read ITLR…EPYF, ADHR…DRPV, GERRTYPEERM, and RVEK…PPGR. Residue Lys1710 forms a Glycyl lysine isopeptide (Lys-Gly) (interchain with G-Cter in SUMO2) linkage. Residues 2096 to 2103 form an involved in interaction with PPP1CA region; that stretch reads KKRVRWAD.

In terms of assembly, interacts with PPP1CA and NCOA5. Forms a complex with ILF2, ILF3, KHDRBS1, RBMX, NCOA5 and PPP1CA. In terms of tissue distribution, expressed in neuronal, neuroblastoma and embryonic kidney cell lines (at protein level).

The protein resides in the nucleus. It localises to the nucleus speckle. Functionally, plays a role in the reduction of telomerase activity during differentiation of embryonic stem cells by binding to the core promoter of TERT and controlling its down-regulation. The polypeptide is YLP motif-containing protein 1 (YLPM1) (Homo sapiens (Human)).